A 675-amino-acid polypeptide reads, in one-letter code: Methionine--tRNA ligase (675 aa).

Positions 15-25 (PYANGSIHLGH) match the 'HIGH' region motif. The Zn(2+) site is built by Cys146, Cys149, Cys159, and Cys162. Positions 331–335 (KMSKS) match the 'KMSKS' region motif. ATP is bound at residue Lys334. Positions 574 to 675 (DFAKIDLRIA…EGAQPGMKVK (102 aa)) constitute a tRNA-binding domain.

It belongs to the class-I aminoacyl-tRNA synthetase family. MetG type 1 subfamily. As to quaternary structure, homodimer. Zn(2+) serves as cofactor.

It is found in the cytoplasm. It catalyses the reaction tRNA(Met) + L-methionine + ATP = L-methionyl-tRNA(Met) + AMP + diphosphate. Its function is as follows. Is required not only for elongation of protein synthesis but also for the initiation of all mRNA translation through initiator tRNA(fMet) aminoacylation. The polypeptide is Methionine--tRNA ligase (Pseudoalteromonas atlantica (strain T6c / ATCC BAA-1087)).